The sequence spans 311 residues: Malate dehydrogenase (311 aa).

Residues 7–12 (GAGNVG) and Asp32 each bind NAD(+). The substrate site is built by Arg82 and Arg88. NAD(+) is bound by residues Asn95 and 118-120 (VSN). Positions 120 and 151 each coordinate substrate. His175 acts as the Proton acceptor in catalysis.

Belongs to the LDH/MDH superfamily. MDH type 3 family.

The enzyme catalyses (S)-malate + NAD(+) = oxaloacetate + NADH + H(+). Its function is as follows. Catalyzes the reversible oxidation of malate to oxaloacetate. The protein is Malate dehydrogenase of Flavobacterium johnsoniae (strain ATCC 17061 / DSM 2064 / JCM 8514 / BCRC 14874 / CCUG 350202 / NBRC 14942 / NCIMB 11054 / UW101) (Cytophaga johnsonae).